The primary structure comprises 400 residues: Lysophospholipid transporter LplT (400 aa).

The next 12 helical transmembrane spans lie at 19 to 39 (VIVA…ATLA), 53 to 73 (VLQM…GQIA), 91 to 111 (AGAA…LVGI), 139 to 159 (LMEA…GVLA), 164 to 184 (IAAL…NLFI), 195 to 213 (SWRL…VVLW), 227 to 247 (LFWG…PVAL), 257 to 277 (YLNA…AKLV), 281 to 301 (TVSR…IFSL), 304 to 324 (ALLP…FFVV), 352 to 372 (NSAM…GVPA), and 373 to 393 (VAIG…LWIW).

Belongs to the major facilitator superfamily. LplT (TC 2.A.1.42) family.

The protein resides in the cell inner membrane. Its function is as follows. Catalyzes the facilitated diffusion of 2-acyl-glycero-3-phosphoethanolamine (2-acyl-GPE) into the cell. The polypeptide is Lysophospholipid transporter LplT (Salmonella typhi).